The following is an 815-amino-acid chain: Serotype-specific mannosyltransferase WbdA (815 aa).

The interval 1–374 (MSRAIIENAG…WANTAHLAID (374 aa)) is alpha-(1-&gt;2)-mannosyltransferase. The tract at residues 431–804 (KLLVDISVLA…WKQSAELLLK (374 aa)) is alpha-(1-&gt;3)-mannosyltransferase.

This sequence belongs to the glycosyltransferase group 1 family. Glycosyltransferase 4 subfamily.

It is found in the cell inner membrane. It functions in the pathway bacterial outer membrane biogenesis; LPS O-antigen biosynthesis. Its function is as follows. Mannosyltransferase involved in the biosynthesis of the repeat unit of the lipopolysaccharide (LPS) O-antigen region. This is Serotype-specific mannosyltransferase WbdA from Escherichia coli.